Here is a 414-residue protein sequence, read N- to C-terminus: Serine/threonine-protein kinase 32B (414 aa).

Residues 23–283 (FQILRAIGKG…LHDIQSVPYL (261 aa)) enclose the Protein kinase domain. Residues 29 to 37 (IGKGSFGKV) and lysine 52 each bind ATP. The active-site Proton acceptor is aspartate 146. Positions 374–396 (QGQGSQLLDTDSRGGGQAQSKLQ) are disordered.

Belongs to the protein kinase superfamily. Ser/Thr protein kinase family. Mg(2+) serves as cofactor.

The catalysed reaction is L-seryl-[protein] + ATP = O-phospho-L-seryl-[protein] + ADP + H(+). It catalyses the reaction L-threonyl-[protein] + ATP = O-phospho-L-threonyl-[protein] + ADP + H(+). The polypeptide is Serine/threonine-protein kinase 32B (Homo sapiens (Human)).